Here is an 893-residue protein sequence, read N- to C-terminus: Translation initiation factor IF-2 (893 aa).

The tract at residues 1–266 (MVDTKNPGDK…AKPAPSKQRG (266 aa)) is disordered. Positions 59-70 (PADAPTAAAAAP) are enriched in low complexity. Positions 71-92 (APAPAPVPSAAPRPAAPPPPSR) are enriched in pro residues. A compositionally biased stretch (low complexity) spans 93–104 (PQQSRSQSPSRS). Composition is skewed to basic and acidic residues over residues 128 to 148 (ARVR…RRNS) and 155 to 196 (AERE…EAKR). Residues 197–226 (PAAAATPAKSATPAARPTGAPAVRAPGVAA) are compositionally biased toward low complexity. The tr-type G domain occupies 389–560 (PRSPVVTVMG…ALQAELLDLK (172 aa)). A G1 region spans residues 398–405 (GHVDHGKT). Residue 398–405 (GHVDHGKT) coordinates GTP. The interval 423–427 (GITQH) is G2. A G3 region spans residues 446–449 (DTPG). Residues 446–450 (DTPGH) and 500–503 (NKID) each bind GTP. Residues 500-503 (NKID) form a G4 region. A G5 region spans residues 536-538 (SAK).

It belongs to the TRAFAC class translation factor GTPase superfamily. Classic translation factor GTPase family. IF-2 subfamily.

It localises to the cytoplasm. Functionally, one of the essential components for the initiation of protein synthesis. Protects formylmethionyl-tRNA from spontaneous hydrolysis and promotes its binding to the 30S ribosomal subunits. Also involved in the hydrolysis of GTP during the formation of the 70S ribosomal complex. The protein is Translation initiation factor IF-2 of Rhodopseudomonas palustris (strain BisA53).